The primary structure comprises 509 residues: Maturase K (509 aa).

It belongs to the intron maturase 2 family. MatK subfamily.

It is found in the plastid. The protein localises to the chloroplast. Usually encoded in the trnK tRNA gene intron. Probably assists in splicing its own and other chloroplast group II introns. This is Maturase K from Nymphaea odorata (White water lily).